Here is a 515-residue protein sequence, read N- to C-terminus: Cytidine and dCMP deaminase domain-containing protein 1 (515 aa).

Composition is skewed to polar residues over residues 1–11 (MKEAGQMQNLE) and 18–27 (SVSTQTGSMT). Disordered regions lie at residues 1–27 (MKEA…GSMT) and 56–83 (RQKS…STDK). Positions 60-83 (QKNEEGKHGPLGDNEEMTRVSTDK) are enriched in basic and acidic residues. In terms of domain architecture, CMP/dCMP-type deaminase 1 spans 71-169 (GDNEEMTRVS…SLLTEASSSE (99 aa)). 3 residues coordinate Zn(2+): His110, Cys135, and Cys138. A Nuclear export signal motif is present at residues 272–284 (NLRQNMKDLILLL). The region spanning 318–483 (EIARHCMVQA…LNPSGAYGLE (166 aa)) is the CMP/dCMP-type deaminase 2 domain. His399 serves as a coordination point for Zn(2+). Glu401 serves as the catalytic Proton donor. The Zn(2+) site is built by Cys427 and Cys430. Residues 489 to 511 (RRENGVLRPVPQKEEQHQDKKLC) carry the Bipartite nuclear localization signal motif. The tract at residues 494–515 (VLRPVPQKEEQHQDKKLCLGIH) is disordered.

It belongs to the cytidine and deoxycytidylate deaminase family. The cofactor is Zn(2+).

The protein resides in the cytoplasm. The protein localises to the nucleus. The catalysed reaction is 2'-deoxycytidine + H2O + H(+) = 2'-deoxyuridine + NH4(+). It carries out the reaction cytidine + H2O + H(+) = uridine + NH4(+). In terms of biological role, catalyzes the deamination of cytidine and deoxycytidine into uridine and deoxyuridine, respectively. May play an important role in testicular development and spermatogenesis. This is Cytidine and dCMP deaminase domain-containing protein 1 (CDADC1) from Pongo abelii (Sumatran orangutan).